The primary structure comprises 398 residues: 1-deoxy-D-xylulose 5-phosphate reductoisomerase (398 aa).

Positions 28, 29, 30, 31, 54, 57, and 135 each coordinate NADPH. 1-deoxy-D-xylulose 5-phosphate is bound at residue K136. E137 provides a ligand contact to NADPH. A Mn(2+)-binding site is contributed by D159. Residues S160, E161, S185, and H208 each coordinate 1-deoxy-D-xylulose 5-phosphate. E161 lines the Mn(2+) pocket. Position 214 (G214) interacts with NADPH. 4 residues coordinate 1-deoxy-D-xylulose 5-phosphate: S221, N226, K227, and E230. A Mn(2+)-binding site is contributed by E230.

Belongs to the DXR family. It depends on Mg(2+) as a cofactor. Requires Mn(2+) as cofactor.

It catalyses the reaction 2-C-methyl-D-erythritol 4-phosphate + NADP(+) = 1-deoxy-D-xylulose 5-phosphate + NADPH + H(+). It functions in the pathway isoprenoid biosynthesis; isopentenyl diphosphate biosynthesis via DXP pathway; isopentenyl diphosphate from 1-deoxy-D-xylulose 5-phosphate: step 1/6. Catalyzes the NADPH-dependent rearrangement and reduction of 1-deoxy-D-xylulose-5-phosphate (DXP) to 2-C-methyl-D-erythritol 4-phosphate (MEP). This chain is 1-deoxy-D-xylulose 5-phosphate reductoisomerase, found in Rhodococcus jostii (strain RHA1).